A 513-amino-acid polypeptide reads, in one-letter code: MTEPTQPNAAQPNVVPEVDDNKIIAERREKLRELREQGVAYPNDFRPTHHAEDLQAQYEHSDKEALEANPLEVAIAGRMMLKRVMGKASFATVRDGSGQIQFFITPADVGQETYDAFKKWDMGDIVAARGVLFRTNKGELSVRCTELRLLSKSLRPLPDKFHGLSDQEMKYRQRYVDLIVTPETRKTFVARTKAISSIRKFMADADFMEVETPMLHPIPGGAAAKPFTTHHNALDMQMFLRIAPELYLKRLVVGGFERVFEINRNFRNEGVSVRHNPEFTMIEFYAAYTDYKWLMDFTEQLIRQAAIDALGTATITYQGRELDLAKPFHRLTITQAIQKYAPQYTNEQLADSAFLRTELKKFGVDASQPQFLNAGVGALQLALFEETAESQLWEPTYIIDYPIEVSPLARASDKVEGITERFELFITGREIANGFSELNDPEDQAARFRKQVDQKDAGDEEAMFYDADYIRALEYGMPPAGGCGIGIDRLVMLLTDSPSIRDVILFPHLRRED.

Over residues Met1–Gln11 the composition is skewed to polar residues. The tract at residues Met1–Lys22 is disordered. Mg(2+)-binding residues include Glu423 and Glu430.

It belongs to the class-II aminoacyl-tRNA synthetase family. Homodimer. Mg(2+) serves as cofactor.

Its subcellular location is the cytoplasm. It carries out the reaction tRNA(Lys) + L-lysine + ATP = L-lysyl-tRNA(Lys) + AMP + diphosphate. The sequence is that of Lysine--tRNA ligase from Paraburkholderia xenovorans (strain LB400).